Consider the following 549-residue polypeptide: Lipase 4 (549 aa).

Residues 1–15 (MKLALVLSLIVSVAA) form the signal peptide. An intrachain disulfide couples Cys75 to Cys112. Ser224 serves as the catalytic Acyl-ester intermediate. Cys283 and Cys292 form a disulfide bridge. Residue Glu356 is the Charge relay system of the active site. An N-linked (GlcNAc...) asparagine glycan is attached at Asn366. The active-site Charge relay system is His464.

The protein belongs to the type-B carboxylesterase/lipase family.

It carries out the reaction a triacylglycerol + H2O = a diacylglycerol + a fatty acid + H(+). The polypeptide is Lipase 4 (LIP4) (Diutina rugosa (Yeast)).